Reading from the N-terminus, the 182-residue chain is Large ribosomal subunit protein uL6 (182 aa).

Belongs to the universal ribosomal protein uL6 family. As to quaternary structure, part of the 50S ribosomal subunit.

This protein binds to the 23S rRNA, and is important in its secondary structure. It is located near the subunit interface in the base of the L7/L12 stalk, and near the tRNA binding site of the peptidyltransferase center. This Dehalococcoides mccartyi (strain CBDB1) protein is Large ribosomal subunit protein uL6.